A 273-amino-acid chain; its full sequence is Dermonecrotic toxin LsaSicTox-alphaIB1avi (273 aa).

His5 is an active-site residue. Mg(2+) is bound by residues Glu25 and Asp27. The active-site Nucleophile is His41. Intrachain disulfides connect Cys45–Cys51 and Cys47–Cys190. Asp85 contributes to the Mg(2+) binding site.

It belongs to the arthropod phospholipase D family. Class II subfamily. The cofactor is Mg(2+). As to expression, expressed by the venom gland.

It is found in the secreted. The catalysed reaction is an N-(acyl)-sphingosylphosphocholine = an N-(acyl)-sphingosyl-1,3-cyclic phosphate + choline. It catalyses the reaction an N-(acyl)-sphingosylphosphoethanolamine = an N-(acyl)-sphingosyl-1,3-cyclic phosphate + ethanolamine. It carries out the reaction a 1-acyl-sn-glycero-3-phosphocholine = a 1-acyl-sn-glycero-2,3-cyclic phosphate + choline. The enzyme catalyses a 1-acyl-sn-glycero-3-phosphoethanolamine = a 1-acyl-sn-glycero-2,3-cyclic phosphate + ethanolamine. Its function is as follows. Dermonecrotic toxins cleave the phosphodiester linkage between the phosphate and headgroup of certain phospholipids (sphingolipid and lysolipid substrates), forming an alcohol (often choline) and a cyclic phosphate. This toxin acts on sphingomyelin (SM). It may also act on ceramide phosphoethanolamine (CPE), lysophosphatidylcholine (LPC) and lysophosphatidylethanolamine (LPE), but not on lysophosphatidylserine (LPS), and lysophosphatidylglycerol (LPG). It acts by transphosphatidylation, releasing exclusively cyclic phosphate products as second products. Induces dermonecrosis, hemolysis, increased vascular permeability, edema, inflammatory response, and platelet aggregation. The protein is Dermonecrotic toxin LsaSicTox-alphaIB1avi of Loxosceles sabina (Tucson recluse spider).